The chain runs to 326 residues: MIEKSQACHDSLLDSVGQTPMVQLHQLFPKHEVFAKLEYMNPGGSMKDRPAKYIIEHGIKHGLITENTHLIESTSGNLGIALAMIAKIKGLKLTCVVDPKISPTNLKIIKSYGANVEMVEEPDAHGGYLMTRIAKVQELLATIDDAYWINQYANELNWQSHYHGAGTEIVETIKQPIDYFVAPVSTTGSIMGMSRKIKEVHPNAQIVAVDAKGSVIFGDKPINRELPGIGASRVPEILNRSEINQVIHVDDYQSALGCRKLIDYEGIFAGGSTGSIIAAIEQLITSIEEGATIVTILPDRGDRYLDLVYSDTWLEKMKSRQGVKSE.

The residue at position 47 (Lys-47) is an N6-(pyridoxal phosphate)lysine. Pyridoxal 5'-phosphate contacts are provided by residues Asn-77, 185-189, and Ser-272; that span reads STTGS.

This sequence belongs to the cysteine synthase/cystathionine beta-synthase family. SbnA subfamily. Homodimer. Pyridoxal 5'-phosphate is required as a cofactor.

It catalyses the reaction O-phospho-L-serine + L-glutamate = N-[(2S)-2-amino-2-carboxyethyl]-L-glutamate + phosphate + H(+). It participates in siderophore biosynthesis. In terms of biological role, catalyzes the synthesis of N-((2S)-2-amino-2-carboxyethyl)-L-glutamate (ACEGA) from O-phospho-L-serine and L-glutamate. Involved in the biosynthesis of L-2,3-diaminopropionic acid (L-Dap), a precursor of staphyloferrin B and antibiotics. The polypeptide is N-(2-amino-2-carboxyethyl)-L-glutamate synthase (sbnA) (Staphylococcus aureus (strain COL)).